The following is an 89-amino-acid chain: Phosphocarrier protein HPr (89 aa).

Positions 1-88 constitute an HPr domain; the sequence is MLEHELTVTN…ELFENRFNED (88 aa). The active-site Pros-phosphohistidine intermediate is the His-15. A Phosphoserine; by HPrK/P modification is found at Ser-46.

This sequence belongs to the HPr family.

The protein localises to the cytoplasm. Phosphorylation on Ser-46 inhibits the phosphoryl transfer from enzyme I to HPr. Functionally, general (non sugar-specific) component of the phosphoenolpyruvate-dependent sugar phosphotransferase system (sugar PTS). This major carbohydrate active-transport system catalyzes the phosphorylation of incoming sugar substrates concomitantly with their translocation across the cell membrane. The phosphoryl group from phosphoenolpyruvate (PEP) is transferred to the phosphoryl carrier protein HPr by enzyme I. Phospho-HPr then transfers it to the PTS EIIA domain. This is Phosphocarrier protein HPr (ptsH) from Xylella fastidiosa (strain Temecula1 / ATCC 700964).